Consider the following 745-residue polypeptide: MEEELQHSHCVNCVSRRCMTRPEPGISCDLIGCPLVCGAVFHSCKADEHRLLCPFERVPCLNSDFGCPFTMARNKVAEHLEMCPASVVCCTMEWNRWPVSYADRKSYENLSRDVDEVAQLDMALALQDQRMLLESLKVATMMSKATDKVSKPREQISVKSSVPEIPHANGLVSVDEESYGALYQATVETTRSLAAALDILNTATRDIGMLNTSVPNDMDEQQNARESLEDQNLKDQDHLYEEEIGAVGGIDYNDTNQNAQSEQNGSSDLLCDLNTSSYDTSALCNGFPLENICTQVIDQNQNLHGDSKQSNLTNGDCVASSDGTSKPSSSLAVAAQLREIIPSSALPNGTVQHILMPDDEGEGELCWKKVDLGDVKNVDVLSFSHAPSFNFLSNSCWSKPKEDKAVDTSDLEVAEDPMGLQGIDLITAALLFCLGDSPGGRGISDSRMADIYHIDVGTQTFSLPSAILATSTMVGEIASASACDHANPQLSNPSPFQTLGLDLVLECVARYQPKQRSMFTFVCGQLFRRKEFSSHFKNVHGDIHAGLNGWMEQRCPLAYYGCTYSQRRFCPSIQGAKIIHDRHLRSFGVQPCVSTVLVEPARNCVLGLHNDHLSSLPFEVLQHIAGFLDGFSLCQLSCVSKLMRDVCGSLLQSRGMVILQWGKRKYPEGNSSWQIKEKVWRFSTAFCSVNEWKFADILSMADHLKKCSYNVVEKREEAIPLPCMCVTRELTKEGRSLRSVLKPVL.

The segment at 48–109 adopts a TRAF-type zinc-finger fold; sequence EHRLLCPFER…SYADRKSYEN (62 aa). 2 disordered regions span residues 211 to 231 and 305 to 324; these read NTSV…LEDQ and GDSK…SDGT. The segment covering 222-231 has biased composition (basic and acidic residues); that stretch reads QNARESLEDQ. The segment covering 305–314 has biased composition (polar residues); that stretch reads GDSKQSNLTN. The F-box domain maps to 610 to 658; that stretch reads NDHLSSLPFEVLQHIAGFLDGFSLCQLSCVSKLMRDVCGSLLQSRGMVI.

Part of a SCF (SKP1-cullin-F-box) protein ligase complex. Interacts with SKP1, CUL1 and RBX1/ROC1. In terms of processing, auto-ubiquitinated. May be neddylated. Neddylation may be required for E3 ligase activity.

It participates in protein modification; protein ubiquitination. Substrate-recognition component of the SCF (SKP1-CUL1-F-box protein)-type E3 ubiquitin ligase complex. Required for muscle atrophy following denervation. In Homo sapiens (Human), this protein is F-box only protein 30 (FBXO30).